Here is a 442-residue protein sequence, read N- to C-terminus: UDP-N-acetylglucosamine--peptide N-acetylglucosaminyltransferase stabilizing protein GtfB (442 aa).

It belongs to the GtfB family. In terms of assembly, interacts with glycosyltransferase GtfA (Gtf1). Interacts with glycosyltransferase GtfA; probably forms a heterotetramer with 2 subunits each of GtfA and GtfB. Part of the accessory SecA2/SecY2 protein translocation apparatus.

The protein localises to the cell membrane. It participates in protein modification; protein glycosylation. In terms of biological role, required for the polymorphic O-glycosylation of the serine-rich repeat protein Srr2. A stabilizing protein that is part of the accessory SecA2/SecY2 system specifically required to export serine-rich repeat proteins, probably Srr2 in this organism. The GtfA-GtfB (Gtf1-Gtf2 in this bacteria) complex adds GlcNAc from UDP-GlcNAc to Srr2 substrate, attaching the first sugar residue. Stabilizes the glycosylation activity of GtfA in vivo. Upon expression in a gtfB deletion mutant of S.parasanguis, GtfB confers incorrect glycosylation and partial complementation of a biofilm formation defect, while GtfA/GtfB restores correct expression of serine-rich repeat protein Fap1 and completely restores a biofilm formation defect in a S.parasanguis double gtfA-gtfB deletion. This Streptococcus agalactiae protein is UDP-N-acetylglucosamine--peptide N-acetylglucosaminyltransferase stabilizing protein GtfB.